Consider the following 186-residue polypeptide: Probable chorismate pyruvate-lyase (186 aa).

Substrate contacts are provided by arginine 78, leucine 116, and glutamate 175.

This sequence belongs to the UbiC family.

The protein localises to the cytoplasm. The catalysed reaction is chorismate = 4-hydroxybenzoate + pyruvate. The protein operates within cofactor biosynthesis; ubiquinone biosynthesis. Removes the pyruvyl group from chorismate, with concomitant aromatization of the ring, to provide 4-hydroxybenzoate (4HB) for the ubiquinone pathway. The sequence is that of Probable chorismate pyruvate-lyase from Psychromonas ingrahamii (strain DSM 17664 / CCUG 51855 / 37).